Reading from the N-terminus, the 274-residue chain is Syntaxin-12 (274 aa).

Residues 1-20 (MSYGPLDMYRNPGPSGPQPR) form a disordered region. Ser2 bears the N-acetylserine mark. At 2-250 (SYGPLDMYRN…AYYQKKSRKK (249 aa)) the chain is on the cytoplasmic side. The stretch at 34-80 (QRISQATAQIKNLMSQLGTKQDSSKLQENLQQFQHSTNQLAKETNEL) forms a coiled coil. Residues 128–150 (EKESIARARAGSRLSAEDRQREE) are disordered. Residues Ser139, Ser142, Ser218, and Ser225 each carry the phosphoserine modification. The t-SNARE coiled-coil homology domain occupies 178-240 (LELIKERETA…ERASDQLQRA (63 aa)). A helical; Anchor for type IV membrane protein membrane pass occupies residues 251 to 271 (MCILVLVLSVIVTVLVVVIWV). At 272–274 (ASK) the chain is on the vesicular side.

It belongs to the syntaxin family. In terms of assembly, associates with the BLOC-1 complex. Interacts with BLOC1S6. Interacts with NAPA and SNAP23. Identified in a complex containing STX6, STX12, VAMP4 and VTI1A. Interacts with GRIPAP1. Forms a complex with GRIP1, GRIA2 and NSG1; controls the intracellular fate of AMPAR and the endosomal sorting of the GRIA2 subunit toward recycling and membrane targeting. Interacts with NSG1. Interacts with TPC1. Interacts (via N-terminus) with VPS13B. In terms of tissue distribution, ubiquitous. Highly expressed in brain.

The protein resides in the endosome membrane. It localises to the golgi apparatus membrane. Its subcellular location is the endomembrane system. It is found in the early endosome membrane. The protein localises to the recycling endosome membrane. In terms of biological role, SNARE promoting fusion of transport vesicles with target membranes. Together with SNARE STX6, promotes movement of vesicles from endosomes to the cell membrane, and may therefore function in the endocytic recycling pathway. Through complex formation with GRIP1, GRIA2 and NSG1 controls the intracellular fate of AMPAR and the endosomal sorting of the GRIA2 subunit toward recycling and membrane targeting. This is Syntaxin-12 (Stx12) from Rattus norvegicus (Rat).